A 201-amino-acid polypeptide reads, in one-letter code: ATP-dependent Clp protease proteolytic subunit (201 aa).

Serine 98 functions as the Nucleophile in the catalytic mechanism. The active site involves histidine 123.

The protein belongs to the peptidase S14 family. Fourteen ClpP subunits assemble into 2 heptameric rings which stack back to back to give a disk-like structure with a central cavity, resembling the structure of eukaryotic proteasomes.

Its subcellular location is the cytoplasm. It catalyses the reaction Hydrolysis of proteins to small peptides in the presence of ATP and magnesium. alpha-casein is the usual test substrate. In the absence of ATP, only oligopeptides shorter than five residues are hydrolyzed (such as succinyl-Leu-Tyr-|-NHMec, and Leu-Tyr-Leu-|-Tyr-Trp, in which cleavage of the -Tyr-|-Leu- and -Tyr-|-Trp bonds also occurs).. Its function is as follows. Cleaves peptides in various proteins in a process that requires ATP hydrolysis. Has a chymotrypsin-like activity. Plays a major role in the degradation of misfolded proteins. The protein is ATP-dependent Clp protease proteolytic subunit of Rickettsia peacockii (strain Rustic).